We begin with the raw amino-acid sequence, 1783 residues long: 6-methylsalicylic acid synthase (1783 aa).

A compositionally biased stretch (polar residues) spans 1-31 (MITSTSSTEVLTPANGSDDSKGTTTPATSSG). The interval 1 to 40 (MITSTSSTEVLTPANGSDDSKGTTTPATSSGDPEMHDDLL) is disordered. The Ketosynthase family 3 (KS3) domain occupies 45 to 474 (HDDVAIIGMA…GTVSHAIIEA (430 aa)). Active-site for beta-ketoacyl synthase activity residues include cysteine 217, histidine 352, and histidine 394. The tract at residues 587-884 (WVFSGHGAQW…TPTMVRKQPA (298 aa)) is malonyl-CoA:ACP transacylase (MAT) domain. Residue serine 673 is the For acyl/malonyl transferase activity of the active site. The segment at 942-1215 (THKPAANDLL…AFAGVEGESL (274 aa)) is product template (PT) domain. The tract at residues 948–1064 (NDLLGTRTAL…ATVGADATPS (117 aa)) is N-terminal hotdog fold. The PKS/mFAS DH domain maps to 948–1216 (NDLLGTRTAL…FAGVEGESLS (269 aa)). Histidine 980 serves as the catalytic Proton acceptor; for dehydratase activity. The segment at 1078 to 1216 (PQKLSDSFSI…FAGVEGESLS (139 aa)) is C-terminal hotdog fold. The active-site Proton donor; for dehydratase activity is aspartate 1130. The Carrier domain occupies 1707-1781 (EYVLVVVKKC…HLVEYFCQVL (75 aa)). Serine 1741 is subject to O-(pantetheine 4'-phosphoryl)serine.

The catalysed reaction is 3 malonyl-CoA + acetyl-CoA + NADPH + 3 H(+) = 6-methylsalicylate + 3 CO2 + NADP(+) + 4 CoA + H2O. Its pathway is secondary metabolite biosynthesis; terpenoid biosynthesis. Its function is as follows. Non-reducing polyketide synthase; part of the gene cluster that mediates the biosynthesis of macrophorins, isoprenoid epoxycyclohexenones containing cyclized drimane moieties. The first step of the pathway is the synthesis of 6-methylsalicylic acid (6-MSA) by the polyketide synthase macA. 6-MSA is then converted to m-cresol by the decarboxylase macB. The cytochrome P450 monooxygenase macC then catalyzes the oxidation of m-cresol to toluquinol. Epoxidation of toluquinol is then performed by the short chain dehydrogenase macD, with the help of macE, and a further prenylation by macG leads to 7-deacetoxyyanuthone A. The next step is the hydroxylation of C-22 of 7-deacetoxyyanuthone A by the cytochrome P450 monooxygenase macH to yield 22-deacetylyanuthone A. O-Mevalon transferase macI then attaches mevalon to the hydroxyl group of 22-deacetylyanuthone A to produce yanuthone E. The terpene cyclase macJ catalyzes the cyclization of 22-deacetylyanuthone A to macrophorin A. MacJ is also able to catalyze cyclization of yanuthone E and 7-deacetoxyyanuthone A to their corresponding macrophorins. The macJ products can be further modified by macH and macJ, as well as by the FAD-dependent monooxygenase macF, to produce additional macrophorins, including 4'-oxomacrophorin A, 4'-oxomacrophorin D and 4'-oxomacrophorin E. The protein is 6-methylsalicylic acid synthase of Penicillium terrestre.